We begin with the raw amino-acid sequence, 231 residues long: Octanoyltransferase (231 aa).

A BPL/LPL catalytic domain is found at 49–227 (PHLPEAVWLL…ALAARFHLAW (179 aa)). Substrate is bound by residues 91-98 (RGGEVTHH), 158-160 (AIG), and 171-173 (GLA). The active-site Acyl-thioester intermediate is C189.

It belongs to the LipB family.

It is found in the cytoplasm. The catalysed reaction is octanoyl-[ACP] + L-lysyl-[protein] = N(6)-octanoyl-L-lysyl-[protein] + holo-[ACP] + H(+). The protein operates within protein modification; protein lipoylation via endogenous pathway; protein N(6)-(lipoyl)lysine from octanoyl-[acyl-carrier-protein]: step 1/2. Its function is as follows. Catalyzes the transfer of endogenously produced octanoic acid from octanoyl-acyl-carrier-protein onto the lipoyl domains of lipoate-dependent enzymes. Lipoyl-ACP can also act as a substrate although octanoyl-ACP is likely to be the physiological substrate. The polypeptide is Octanoyltransferase (Parasynechococcus marenigrum (strain WH8102)).